The chain runs to 169 residues: Endoribonuclease YbeY (169 aa).

Positions 126, 130, and 136 each coordinate Zn(2+).

The protein belongs to the endoribonuclease YbeY family. Zn(2+) serves as cofactor.

Its subcellular location is the cytoplasm. Single strand-specific metallo-endoribonuclease involved in late-stage 70S ribosome quality control and in maturation of the 3' terminus of the 16S rRNA. The polypeptide is Endoribonuclease YbeY (Bradyrhizobium sp. (strain BTAi1 / ATCC BAA-1182)).